The primary structure comprises 669 residues: PDF receptor (669 aa).

Over 1-244 the chain is Extracellular; sequence MTLLSNILDC…DIARRTRTLE (244 aa). Residues 24–52 are disordered; the sequence is RQSGSSGPSPSAPTAGTFESKSMLEPTSS. Low complexity predominate over residues 26–40; it reads SGSSGPSPSAPTAGT. Asn-111, Asn-117, Asn-130, Asn-137, Asn-148, and Asn-198 each carry an N-linked (GlcNAc...) asparagine glycan. Residues 245–265 form a helical membrane-spanning segment; it reads IVGLCLSLFALIVSLLIFCTF. The Cytoplasmic segment spans residues 266-274; it reads RSLRNNRTK. A helical transmembrane segment spans residues 275–295; it reads IHKNLFVAMVLQVIIRLTLYL. At 296–334 the chain is on the extracellular side; sequence DQFRRGNKEAATNTSLSVIENTPYLCEASYVLLEYARTA. The N-linked (GlcNAc...) asparagine glycan is linked to Asn-308. Residues 335–355 traverse the membrane as a helical segment; the sequence is MFMWMFIEGLYLHNMVTVAVF. The Cytoplasmic portion of the chain corresponds to 356–366; the sequence is QGSFPLKFFSR. A helical transmembrane segment spans residues 367–387; that stretch reads LGWCVPILMTTVWARCTVMYM. The Extracellular portion of the chain corresponds to 388-411; the sequence is DTSLGECLWNYNLTPYYWILEGPR. The helical transmembrane segment at 412–432 threads the bilayer; that stretch reads LAVILLNFCFLVNIIRVLVMK. Over 433–449 the chain is Cytoplasmic; the sequence is LRQSQASDIEQTRKAVR. Residues 450-470 traverse the membrane as a helical segment; it reads AAIVLLPLLGITNLLHQLAPL. At 471–480 the chain is on the extracellular side; sequence KTATNFAVWS. Residues 481 to 501 form a helical membrane-spanning segment; it reads YGTHFLTSFQGFFIALIYCFL. The Cytoplasmic segment spans residues 502–669; it reads NGEVRAVLLK…ESVVFELSEQ (168 aa). Disordered regions lie at residues 536 to 573 and 590 to 614; these read AYNT…KPSS and PRLQ…AEPD. Residues 595-609 show a composition bias toward basic and acidic residues; that stretch reads KAREKGKDRVEKTDA.

The protein belongs to the G-protein coupled receptor 2 family. As to expression, mainly present in clock neurons of the brain. Localizes in all 4 s-LNv neurons, 1 LNd neuron, 7 DN1 neurons, and 1 DN3 neuron. In addition to the clock neurons, it is also present in approximately 13 pairs of neurons along the ventral nerve cord in third instar larvae, which do not overlap with dopaminergic or serotonergic neurons. Not present in DN2 neurons (at protein level).

It localises to the cell membrane. In terms of biological role, receptor for PDF, a neuropeptide controlling circadian behavioral rhythms. Probably regulates circadian behavioral rhythms through coordination of activities of clock neurons. PDF-binding results in the elevation of cAMP synthesis. Plays a role in sleep regulation and regulates the state transition from sleep to wake. This Drosophila melanogaster (Fruit fly) protein is PDF receptor.